Consider the following 503-residue polypeptide: Maturase K (503 aa).

The protein belongs to the intron maturase 2 family. MatK subfamily.

It is found in the plastid. The protein localises to the chloroplast. Functionally, usually encoded in the trnK tRNA gene intron. Probably assists in splicing its own and other chloroplast group II introns. The protein is Maturase K of Liquidambar orientalis (Oriental sweet gum).